Consider the following 203-residue polypeptide: Dual specificity phosphatase 29 (203 aa).

The Tyrosine-protein phosphatase domain maps to 47-193 (HVNQVWPRIY…LRALDIALQE (147 aa)). 137–144 (HCVMGRSR) is a binding site for substrate. The active-site Phosphocysteine intermediate is cysteine 138.

Belongs to the protein-tyrosine phosphatase family. Non-receptor class dual specificity subfamily.

It is found in the cytoplasm. It localises to the nucleus. It carries out the reaction O-phospho-L-tyrosyl-[protein] + H2O = L-tyrosyl-[protein] + phosphate. The enzyme catalyses O-phospho-L-seryl-[protein] + H2O = L-seryl-[protein] + phosphate. The catalysed reaction is O-phospho-L-threonyl-[protein] + H2O = L-threonyl-[protein] + phosphate. In terms of biological role, dual specificity phosphatase able to dephosphorylate phosphotyrosine, phosphoserine and phosphothreonine residues within the same substrate, with a preference for phosphotyrosine as a substrate. Involved in the modulation of AMPK and MAPK1/2 signaling pathways. The polypeptide is Dual specificity phosphatase 29 (dusp29) (Oryzias latipes (Japanese rice fish)).